We begin with the raw amino-acid sequence, 258 residues long: Transcription factor ORG3 (258 aa).

In terms of domain architecture, bHLH spans 76–128 (VKKLNHNASERDRRRKINSLFSSLRSCLPASGQSKKLSIPATVSRSLKYIPEL).

As to quaternary structure, homodimer. In terms of tissue distribution, expressed in vascular tissues. Detected in roots.

The protein resides in the nucleus. In Arabidopsis thaliana (Mouse-ear cress), this protein is Transcription factor ORG3 (ORG3).